The chain runs to 337 residues: 1-aminocyclopropane-1-carboxylate deaminase (337 aa).

N6-(pyridoxal phosphate)lysine is present on lysine 50. The active-site Nucleophile is serine 77.

Belongs to the ACC deaminase/D-cysteine desulfhydrase family. As to quaternary structure, homotrimer. It depends on pyridoxal 5'-phosphate as a cofactor.

It catalyses the reaction 1-aminocyclopropane-1-carboxylate + H2O = 2-oxobutanoate + NH4(+). Its function is as follows. Catalyzes a cyclopropane ring-opening reaction, the irreversible conversion of 1-aminocyclopropane-1-carboxylate (ACC) to ammonia and alpha-ketobutyrate. Allows growth on ACC as a nitrogen source. The protein is 1-aminocyclopropane-1-carboxylate deaminase of Rhizobium rhizogenes (strain K84 / ATCC BAA-868) (Agrobacterium radiobacter).